We begin with the raw amino-acid sequence, 199 residues long: Cytochrome b (199 aa).

4 helical membrane-spanning segments follow: residues 1–8 (LTGLFLAM), 32–53 (WLIRNLHANGASFFFICIYFHI), 68–88 (WNIGVVLLLLVMMTAFVGYVL), and 133–153 (FFAFHFLFPFVILAMTILHLL). The heme b site is built by H38 and H52. Heme b-binding residues include H137 and H151. H156 is a binding site for a ubiquinone. A helical transmembrane segment spans residues 181–199 (YKDLLGFAILLVALASLAH).

The protein belongs to the cytochrome b family. The cytochrome bc1 complex contains 3 respiratory subunits (MT-CYB, CYC1 and UQCRFS1), 2 core proteins (UQCRC1 and UQCRC2) and probably 6 low-molecular weight proteins. The cofactor is heme b.

Its subcellular location is the mitochondrion inner membrane. Component of the ubiquinol-cytochrome c reductase complex (complex III or cytochrome b-c1 complex) that is part of the mitochondrial respiratory chain. The b-c1 complex mediates electron transfer from ubiquinol to cytochrome c. Contributes to the generation of a proton gradient across the mitochondrial membrane that is then used for ATP synthesis. The polypeptide is Cytochrome b (mt-cyb) (Sarda chiliensis (Pacific bonito)).